Here is a 213-residue protein sequence, read N- to C-terminus: Phosphoribosylformylglycinamidine synthase subunit PurQ (213 aa).

The 209-residue stretch at 5-213 folds into the Glutamine amidotransferase type-1 domain; it reads ACVVVYPGSN…FQSILNYLKR (209 aa). The Nucleophile role is filled by Cys-86. Residues His-186 and Glu-188 contribute to the active site.

Part of the FGAM synthase complex composed of 1 PurL, 1 PurQ and 2 PurS subunits.

The protein resides in the cytoplasm. It catalyses the reaction N(2)-formyl-N(1)-(5-phospho-beta-D-ribosyl)glycinamide + L-glutamine + ATP + H2O = 2-formamido-N(1)-(5-O-phospho-beta-D-ribosyl)acetamidine + L-glutamate + ADP + phosphate + H(+). The enzyme catalyses L-glutamine + H2O = L-glutamate + NH4(+). Its pathway is purine metabolism; IMP biosynthesis via de novo pathway; 5-amino-1-(5-phospho-D-ribosyl)imidazole from N(2)-formyl-N(1)-(5-phospho-D-ribosyl)glycinamide: step 1/2. In terms of biological role, part of the phosphoribosylformylglycinamidine synthase complex involved in the purines biosynthetic pathway. Catalyzes the ATP-dependent conversion of formylglycinamide ribonucleotide (FGAR) and glutamine to yield formylglycinamidine ribonucleotide (FGAM) and glutamate. The FGAM synthase complex is composed of three subunits. PurQ produces an ammonia molecule by converting glutamine to glutamate. PurL transfers the ammonia molecule to FGAR to form FGAM in an ATP-dependent manner. PurS interacts with PurQ and PurL and is thought to assist in the transfer of the ammonia molecule from PurQ to PurL. In Thermotoga maritima (strain ATCC 43589 / DSM 3109 / JCM 10099 / NBRC 100826 / MSB8), this protein is Phosphoribosylformylglycinamidine synthase subunit PurQ.